A 31-amino-acid chain; its full sequence is MLTLLSYFGLLLAALISTLVLFIGLNKVKLI.

Residues 4 to 24 (LLSYFGLLLAALISTLVLFIG) traverse the membrane as a helical segment.

It belongs to the PetL family. As to quaternary structure, the 4 large subunits of the cytochrome b6-f complex are cytochrome b6, subunit IV (17 kDa polypeptide, PetD), cytochrome f and the Rieske protein, while the 4 small subunits are PetG, PetL, PetM and PetN. The complex functions as a dimer.

The protein resides in the plastid. It localises to the chloroplast thylakoid membrane. Functionally, component of the cytochrome b6-f complex, which mediates electron transfer between photosystem II (PSII) and photosystem I (PSI), cyclic electron flow around PSI, and state transitions. PetL is important for photoautotrophic growth as well as for electron transfer efficiency and stability of the cytochrome b6-f complex. The chain is Cytochrome b6-f complex subunit 6 from Psilotum nudum (Whisk fern).